A 1186-amino-acid polypeptide reads, in one-letter code: Pumilio homolog 1 (1186 aa).

Ser2 carries the N-acetylserine modification. Phosphoserine is present on Ser19. Residues 22–73 (LKHHPQEPANPNMPVVLTSGTGSQAQPQPAANQALAAGTHSSPVPGSIGVAG) form a disordered region. Positions 45–58 (QAQPQPAANQALAA) are enriched in low complexity. Phosphoserine occurs at positions 75, 98, and 106. Thr112 is subject to Phosphothreonine. Residues Ser124, Ser159, Ser197, Ser209, and Ser229 each carry the phosphoserine modification. A disordered region spans residues 233 to 272 (SCLRKGGFGPRDADSDENDKGEKKNKGTFDGDKLGDLKEE). A compositionally biased stretch (basic and acidic residues) spans 250–272 (NDKGEKKNKGTFDGDKLGDLKEE). Position 305 is a phosphoserine (Ser305). Over residues 485-502 (TNSANQQTTPQAQQGQQQ) the composition is skewed to low complexity. Disordered stretches follow at residues 485 to 524 (TNSA…GQQT) and 613 to 648 (AGTT…FYGN). Residues 511–524 (RPLTPNQNQQGQQT) are compositionally biased toward polar residues. Thr514 carries the phosphothreonine modification. Residues 626–639 (QQPQPQPQQQPNNN) are compositionally biased toward low complexity. Ser709 and Ser714 each carry phosphoserine. Residues 742–775 (GPVGMPLPSQGPGHSQTPPPSLSSHGSSSSLNLG) are disordered. Low complexity predominate over residues 763–775 (LSSHGSSSSLNLG). The residue at position 796 (Arg796) is an Omega-N-methylarginine. Ser806 and Ser822 each carry phosphoserine. Residues 828-1168 (GRSRLLEDFR…HILAKLEKYY (341 aa)) enclose the PUM-HD domain. Pumilio repeat units lie at residues 848 to 883 (EIAG…LVFN), 884 to 919 (EILQ…ALAE), 920 to 955 (RIRG…EMVR), 956 to 991 (ELDG…FIID), 992 to 1027 (AFKG…PILE), 1028 to 1063 (ELHQ…KIVA), 1064 to 1099 (EIRG…VLID), and 1103 to 1142 (TMND…IVMH). Positions 863–867 (SRFIQ) are adenine-nucleotide binding in RNA target. A uracil-nucleotide binding in RNA target region spans residues 899 to 903 (NYVIQ). An adenine-nucleotide binding in RNA target region spans residues 935-939 (CRVIQ). The non-specific-nucleotide binding in RNA target stretch occupies residues 971–975 (NHVVQ). The interval 1007 to 1011 (CRVIQ) is adenine-nucleotide binding in RNA target. Residues 1043-1047 (NYVIQ) are uracil-nucleotide binding in RNA target. Guanine-nucleotide binding in RNA target stretches follow at residues 1079–1083 (SNVVE) and 1080–1083 (NVVE). The segment at 1122–1126 (NYVVQ) is uracil-nucleotide binding in RNA target.

As to quaternary structure, recruits the CCR4-POP2-NOT deadenylase leading to translational inhibition and mRNA degradation. Interacts with TRIM71 (via NHL repeats) in an RNA-dependent manner. Post-translationally, phosphorylation at Ser-714 promotes RNA-binding activity. Following growth factor stimulation phosphorylated at Ser-714, promoting binding to the 3'-UTR of CDKN1B/p27 mRNA.

It localises to the cytoplasm. Its subcellular location is the P-body. The protein localises to the cytoplasmic granule. In terms of biological role, sequence-specific RNA-binding protein that acts as a post-transcriptional repressor by binding the 3'-UTR of mRNA targets. Binds to an RNA consensus sequence, the Pumilio Response Element (PRE), 5'-UGUANAUA-3', that is related to the Nanos Response Element (NRE). Mediates post-transcriptional repression of transcripts via different mechanisms: acts via direct recruitment of the CCR4-POP2-NOT deadenylase leading to translational inhibition and mRNA degradation. Also mediates deadenylation-independent repression by promoting accessibility of miRNAs. Following growth factor stimulation, phosphorylated and binds to the 3'-UTR of CDKN1B/p27 mRNA, inducing a local conformational change that exposes miRNA-binding sites, promoting association of miR-221 and miR-222, efficient suppression of CDKN1B/p27 expression, and rapid entry to the cell cycle. Acts as a post-transcriptional repressor of E2F3 mRNAs by binding to its 3'-UTR and facilitating miRNA regulation. Represses a program of genes necessary to maintain genomic stability such as key mitotic, DNA repair and DNA replication factors. Its ability to repress those target mRNAs is regulated by the lncRNA NORAD (non-coding RNA activated by DNA damage) which, due to its high abundance and multitude of PUMILIO binding sites, is able to sequester a significant fraction of PUM1 and PUM2 in the cytoplasm. Involved in neuronal functions by regulating ATXN1 mRNA levels: acts by binding to the 3'-UTR of ATXN1 transcripts, leading to their down-regulation independently of the miRNA machinery. Plays a role in cytoplasmic sensing of viral infection. In testis, acts as a post-transcriptional regulator of spermatogenesis by binding to the 3'-UTR of mRNAs coding for regulators of p53/TP53. Involved in embryonic stem cell renewal by facilitating the exit from the ground state: acts by targeting mRNAs coding for naive pluripotency transcription factors and accelerates their down-regulation at the onset of differentiation. Binds specifically to miRNA MIR199A precursor, with PUM2, regulates miRNA MIR199A expression at a postranscriptional level. This Pongo abelii (Sumatran orangutan) protein is Pumilio homolog 1 (PUM1).